The sequence spans 933 residues: Thyroid peroxidase (933 aa).

The N-terminal stretch at 1–18 (MRALAVLSVTLVMACTEA) is a signal peptide. The Extracellular portion of the chain corresponds to 19–846 (FFPFISRGKE…TCVDSGRLPR (828 aa)). Asn129 carries N-linked (GlcNAc...) asparagine glycosylation. Cys142 and Cys158 are joined by a disulfide. Asp238 is a heme b binding site. His239 (proton acceptor) is an active-site residue. Ca(2+) is bound at residue Asp240. 2 cysteine pairs are disulfide-bonded: Cys259–Cys269 and Cys263–Cys286. N-linked (GlcNAc...) asparagine glycosylation is present at Asn307. Ca(2+) contacts are provided by Thr321, Phe323, Asp325, and Ser327. Asn342 carries an N-linked (GlcNAc...) asparagine glycan. Glu399 and His494 together coordinate heme b. The N-linked (GlcNAc...) asparagine glycan is linked to Asn569. Intrachain disulfides connect Cys598-Cys655 and Cys696-Cys721. In terms of domain architecture, Sushi spans 740 to 795 (DKCGFPESVENGDFVHCEESGRRVLVYSCRHGYELQGREQLTCTQEGWDFQPPLCK). Residues 796-839 (DVNECADGAHPPCHASARCRNTKGGFQCLCADPYELGDDGRTCV) enclose the EGF-like; calcium-binding domain. 3 cysteine pairs are disulfide-bonded: Cys800/Cys814, Cys808/Cys823, and Cys825/Cys838. Residues 847-871 (VTWISMSLAALLIGGFAGLTSTVIC) traverse the membrane as a helical segment. Residues 872 to 933 (RWTRTGTKST…RDTHRLPRAL (62 aa)) lie on the Cytoplasmic side of the membrane. The tract at residues 881–933 (TLPISETGGGTPELRCGKHQAVGTSPQRAAAQDSEQESAGMEGRDTHRLPRAL) is disordered. The span at 922 to 933 (EGRDTHRLPRAL) shows a compositional bias: basic and acidic residues.

This sequence belongs to the peroxidase family. XPO subfamily. In terms of assembly, interacts with DUOX1, DUOX2 and CYBA. Requires Ca(2+) as cofactor. It depends on heme b as a cofactor. Post-translationally, glycosylated. Heme is covalently bound through a H(2)O(2)-dependent autocatalytic process. Heme insertion is important for the delivery of protein at the cell surface. In terms of processing, cleaved in its N-terminal part.

It is found in the membrane. Its subcellular location is the cell surface. It carries out the reaction 2 iodide + H2O2 + 2 H(+) = diiodine + 2 H2O. The catalysed reaction is [thyroglobulin]-L-tyrosine + iodide + H2O2 + H(+) = [thyroglobulin]-3-iodo-L-tyrosine + 2 H2O. The enzyme catalyses [thyroglobulin]-3-iodo-L-tyrosine + iodide + H2O2 + H(+) = [thyroglobulin]-3,5-diiodo-L-tyrosine + 2 H2O. It catalyses the reaction 2 [thyroglobulin]-3,5-diiodo-L-tyrosine + H2O2 = [thyroglobulin]-L-thyroxine + [thyroglobulin]-dehydroalanine + 2 H2O. It carries out the reaction [thyroglobulin]-3-iodo-L-tyrosine + [thyroglobulin]-3,5-diiodo-L-tyrosine + H2O2 = [thyroglobulin]-3,3',5-triiodo-L-thyronine + [thyroglobulin]-dehydroalanine + 2 H2O. It functions in the pathway hormone biosynthesis; thyroid hormone biosynthesis. Iodination and coupling of the hormonogenic tyrosines in thyroglobulin to yield the thyroid hormones T(3) and T(4). In Homo sapiens (Human), this protein is Thyroid peroxidase.